The primary structure comprises 337 residues: Glucokinase (337 aa).

11–16 (ADIGGT) provides a ligand contact to ATP.

The protein belongs to the bacterial glucokinase family.

Its subcellular location is the cytoplasm. It catalyses the reaction D-glucose + ATP = D-glucose 6-phosphate + ADP + H(+). This chain is Glucokinase, found in Xylella fastidiosa (strain 9a5c).